Here is a 35-residue protein sequence, read N- to C-terminus: Neurotoxin (35 aa).

Cystine bridges form between Cys7–Cys27, Cys14–Cys32, and Cys18–Cys34.

In terms of tissue distribution, expressed by the venom gland.

It localises to the secreted. In terms of biological role, neurotoxin. Decreases the action potential of myelinated nerves in mice and frogs. In Buthus sp. (strain IY-2001) (Scorpion), this protein is Neurotoxin.